We begin with the raw amino-acid sequence, 549 residues long: Glucose-6-phosphate isomerase (549 aa).

The active-site Proton donor is the Glu353. Residues His384 and Lys513 contribute to the active site.

It belongs to the GPI family.

The protein resides in the cytoplasm. It catalyses the reaction alpha-D-glucose 6-phosphate = beta-D-fructose 6-phosphate. Its pathway is carbohydrate biosynthesis; gluconeogenesis. It participates in carbohydrate degradation; glycolysis; D-glyceraldehyde 3-phosphate and glycerone phosphate from D-glucose: step 2/4. Catalyzes the reversible isomerization of glucose-6-phosphate to fructose-6-phosphate. The chain is Glucose-6-phosphate isomerase from Bartonella bacilliformis (strain ATCC 35685 / KC583 / Herrer 020/F12,63).